A 305-amino-acid polypeptide reads, in one-letter code: MLIRKPADHLPSEITSESVYFNRRQFMAGAAGLLLSAETLAGLAAKKSPLSQLAANDKPNSLKDITSYNNFYEFGTDKSDPAENAHTLRARPWSVLVDGEVAKPRRFSIEELLKFPLEERVYRLRCVEGWSMVIPWVGFPLASLIKQMNPTSRAKYVAFETLQRPSEMPGQRQAVLDWPYREGLRIDEVMHPLAILAVGLYGNALPNQNGAPIRLVVPWKYGFKSIKSIVRIRLQETMPATSWNMANAHEYGFYSNVNPDVDHPRWSQASERRIGEFFKRKTLPFNGYAEQVAGLYRGMDLRKNF.

The segment at residues 1–54 is a signal peptide (tat-type signal); it reads MLIRKPADHLPSEITSESVYFNRRQFMAGAAGLLLSAETLAGLAAKKSPLSQLA. Mo-molybdopterin contacts are provided by residues asparagine 69, 72 to 73, cysteine 126, threonine 161, asparagine 209, arginine 214, and 225 to 227; these read YE and SIK.

It belongs to the MsrP family. In terms of assembly, heterodimer of a catalytic subunit (MsrP) and a heme-binding subunit (MsrQ). It depends on Mo-molybdopterin as a cofactor. In terms of processing, predicted to be exported by the Tat system. The position of the signal peptide cleavage has not been experimentally proven.

The protein localises to the periplasm. The catalysed reaction is L-methionyl-[protein] + a quinone + H2O = L-methionyl-(S)-S-oxide-[protein] + a quinol. It catalyses the reaction L-methionyl-[protein] + a quinone + H2O = L-methionyl-(R)-S-oxide-[protein] + a quinol. Part of the MsrPQ system that repairs oxidized periplasmic proteins containing methionine sulfoxide residues (Met-O), using respiratory chain electrons. Thus protects these proteins from oxidative-stress damage caused by reactive species of oxygen and chlorine generated by the host defense mechanisms. MsrPQ is essential for the maintenance of envelope integrity under bleach stress, rescuing a wide series of structurally unrelated periplasmic proteins from methionine oxidation. The catalytic subunit MsrP is non-stereospecific, being able to reduce both (R-) and (S-) diastereoisomers of methionine sulfoxide. This is Protein-methionine-sulfoxide reductase catalytic subunit MsrP from Chromobacterium violaceum (strain ATCC 12472 / DSM 30191 / JCM 1249 / CCUG 213 / NBRC 12614 / NCIMB 9131 / NCTC 9757 / MK).